Here is a 235-residue protein sequence, read N- to C-terminus: Transmembrane emp24 domain-containing protein 9 (235 aa).

Positions 1–37 (MAVELGVLLVRPRPGTGLGRVMRTLLLVLWLATRGSA) are cleaved as a signal peptide. Residues 38-202 (LYFHIGETEK…RQTSESTNQR (165 aa)) lie on the Lumenal side of the membrane. The region spanning 47–145 (KKCFIEEIPD…MLRVHLDIQV (99 aa)) is the GOLD domain. The interval 121–160 (CLHSNSTKFSLFAGGMLRVHLDIQVGEHANDYAEIAAKDK) is required for interaction with STX17. N-linked (GlcNAc...) asparagine glycosylation occurs at N125. A coiled-coil region spans residues 154-184 (EIAAKDKLSELQLRVRQLVEQVEQIQKEQNY). K160 carries the post-translational modification N6-acetyllysine. Residues 203-222 (VLWWSILQTLILVAIGVWQM) form a helical membrane-spanning segment. Over 223–235 (RHLKSFFEAKKLV) the chain is Cytoplasmic. The COPII vesicle coat-binding signature appears at 228–229 (FF). The short motif at 228–235 (FFEAKKLV) is the COPI vesicle coat-binding element.

This sequence belongs to the EMP24/GP25L family. In terms of assembly, monomer and homodimer in endoplasmic reticulum. Predominantly monomeric and to lesser extent homodimeric in endoplasmic reticulum-Golgi intermediate compartment and cis-Golgi network. Probably oligomerizes with other members of the EMP24/GP25L family such as TMED2, TMED7 and TMED10. Interacts with TMED5. Interacts (via C-terminus) with COPG1; the interaction involves dimeric TMED9. Interacts with PTPN2 and SPAST. Interacts with STX17; the interaction is direct. In terms of processing, N-linked glycosylated containing high mannose.

The protein localises to the endoplasmic reticulum membrane. Its subcellular location is the golgi apparatus. It is found in the cis-Golgi network membrane. It localises to the endoplasmic reticulum-Golgi intermediate compartment membrane. The protein resides in the trans-Golgi network membrane. Appears to be involved in vesicular protein trafficking, mainly in the early secretory pathway. In COPI vesicle-mediated retrograde transport involved in the coatomer recruitment to membranes of the early secretory pathway. Increases coatomer-dependent activity of ARFGAP2. Thought to play a crucial role in the specific retention of p24 complexes in cis-Golgi membranes; specifically contributes to the coupled localization of TMED2 and TMED10 in the cis-Golgi network. May be involved in organization of intracellular membranes, such as of the ER-Golgi intermediate compartment and the Golgi apparatus. Involved in ER localization of PTPN2 isoform PTPB. The chain is Transmembrane emp24 domain-containing protein 9 (TMED9) from Homo sapiens (Human).